We begin with the raw amino-acid sequence, 468 residues long: ATP synthase subunit beta (468 aa).

Position 155 to 162 (Gly-155 to Thr-162) interacts with ATP.

Belongs to the ATPase alpha/beta chains family. F-type ATPases have 2 components, CF(1) - the catalytic core - and CF(0) - the membrane proton channel. CF(1) has five subunits: alpha(3), beta(3), gamma(1), delta(1), epsilon(1). CF(0) has three main subunits: a(1), b(2) and c(9-12). The alpha and beta chains form an alternating ring which encloses part of the gamma chain. CF(1) is attached to CF(0) by a central stalk formed by the gamma and epsilon chains, while a peripheral stalk is formed by the delta and b chains.

The protein localises to the cell inner membrane. It carries out the reaction ATP + H2O + 4 H(+)(in) = ADP + phosphate + 5 H(+)(out). Functionally, produces ATP from ADP in the presence of a proton gradient across the membrane. The catalytic sites are hosted primarily by the beta subunits. The chain is ATP synthase subunit beta from Leptospira biflexa serovar Patoc (strain Patoc 1 / ATCC 23582 / Paris).